The sequence spans 109 residues: Spermidine export protein MdtI (109 aa).

4 helical membrane passes run 6 to 26 (WWHA…NILL), 36 to 56 (WMGI…AQAV), 63 to 83 (IAYA…GWIM), and 88 to 108 (LNYK…MIKM).

Belongs to the drug/metabolite transporter (DMT) superfamily. Small multidrug resistance (SMR) (TC 2.A.7.1) family. MdtI subfamily. Forms a complex with MdtJ.

Its subcellular location is the cell inner membrane. In terms of biological role, catalyzes the excretion of spermidine. In Photorhabdus laumondii subsp. laumondii (strain DSM 15139 / CIP 105565 / TT01) (Photorhabdus luminescens subsp. laumondii), this protein is Spermidine export protein MdtI.